A 341-amino-acid chain; its full sequence is L-threonine 3-dehydrogenase (341 aa).

Cys-38 is a Zn(2+) binding site. Active-site charge relay system residues include Thr-40 and His-43. Residues His-63, Glu-64, Cys-93, Cys-96, Cys-99, and Cys-107 each coordinate Zn(2+). NAD(+) contacts are provided by residues Ile-175, Asp-195, Arg-200, 262–264 (LGI), and 286–287 (IY).

Belongs to the zinc-containing alcohol dehydrogenase family. In terms of assembly, homotetramer. Requires Zn(2+) as cofactor.

The protein resides in the cytoplasm. It catalyses the reaction L-threonine + NAD(+) = (2S)-2-amino-3-oxobutanoate + NADH + H(+). Its pathway is amino-acid degradation; L-threonine degradation via oxydo-reductase pathway; glycine from L-threonine: step 1/2. Catalyzes the NAD(+)-dependent oxidation of L-threonine to 2-amino-3-ketobutyrate. The sequence is that of L-threonine 3-dehydrogenase from Escherichia coli O139:H28 (strain E24377A / ETEC).